A 185-amino-acid chain; its full sequence is Lipid A acyltransferase PagP (185 aa).

The N-terminal stretch at 1–14 (MKLKPVLYLLMLLG) is a signal peptide. A lipid anchor (N-palmitoyl cysteine) is attached at Cys15. The S-diacylglycerol cysteine moiety is linked to residue Cys15. Catalysis depends on residues His57, Asp100, and Ser101.

It belongs to the lipid A palmitoyltransferase family. In terms of assembly, homodimer.

Its subcellular location is the cell outer membrane. It catalyses the reaction a lipid A + a 1,2-diacyl-sn-glycero-3-phosphocholine = a hepta-acyl lipid A + a 2-acyl-sn-glycero-3-phosphocholine. The catalysed reaction is a lipid IVA + a 1,2-diacyl-sn-glycero-3-phosphocholine = a lipid IVB + a 2-acyl-sn-glycero-3-phosphocholine. The enzyme catalyses a lipid IIA + a 1,2-diacyl-sn-glycero-3-phosphocholine = a lipid IIB + a 2-acyl-sn-glycero-3-phosphocholine. Functionally, transfers a fatty acid residue from the sn-1 position of a phospholipid to the N-linked hydroxyfatty acid chain on the proximal unit of lipid A or its precursors. The protein is Lipid A acyltransferase PagP of Erwinia pyrifoliae (strain DSM 12163 / CIP 106111 / Ep16/96).